A 233-amino-acid polypeptide reads, in one-letter code: Purine nucleoside phosphorylase DeoD-type (233 aa).

His4 serves as a coordination point for a purine D-ribonucleoside. Phosphate-binding positions include Gly20, Arg24, Arg43, and 87-90; that span reads RIGT. A purine D-ribonucleoside contacts are provided by residues 179–181 and 203–204; these read EME and SD. The active-site Proton donor is Asp204.

This sequence belongs to the PNP/UDP phosphorylase family. As to quaternary structure, homohexamer; trimer of homodimers.

It carries out the reaction a purine D-ribonucleoside + phosphate = a purine nucleobase + alpha-D-ribose 1-phosphate. The enzyme catalyses a purine 2'-deoxy-D-ribonucleoside + phosphate = a purine nucleobase + 2-deoxy-alpha-D-ribose 1-phosphate. Its function is as follows. Catalyzes the reversible phosphorolytic breakdown of the N-glycosidic bond in the beta-(deoxy)ribonucleoside molecules, with the formation of the corresponding free purine bases and pentose-1-phosphate. This is Purine nucleoside phosphorylase DeoD-type from Helicobacter pylori (strain G27).